Consider the following 261-residue polypeptide: MICOS complex subunit Mic25 (261 aa).

G2 is lipidated: N-myristoyl glycine. A phosphoserine mark is found at S13, S31, and S33. 3 disordered regions span residues 39-59 (KDCSQPSAGEQLAPGPGPECS), 81-114 (CGPAEGTYKAPQGDFKVSRAENSDGQQSSAVKED), and 140-165 (TEKHLKASLPKKKATHEQQQSDRLTR). The stretch at 109-202 (SAVKEDLKKF…AELYKLSSQQ (94 aa)) forms a coiled coil. Over residues 154 to 165 (THEQQQSDRLTR) the composition is skewed to basic and acidic residues. The region spanning 220–261 (EPVCSGLQAQILRCYRDHLHEVLLCSDLAKAYQHCVSTARKG) is the CHCH domain. 2 short sequence motifs (cx9C motif) span residues 223-233 (CSGLQAQILRC) and 244-254 (CSDLAKAYQHC). Cystine bridges form between C223-C254 and C233-C244.

It belongs to the MICOS complex subunit Mic19 family. Metazoan Mic25 subfamily. Component of the mitochondrial contact site and cristae organizing system (MICOS) complex, composed of at least MICOS10/MIC10, CHCHD3/MIC19, CHCHD6/MIC25, APOOL/MIC27, IMMT/MIC60, APOO/MIC23/MIC26 and MICOS13/MIC13. This complex was also known under the names MINOS or MitOS complex. The MICOS complex associates with mitochondrial outer membrane proteins SAMM50, MTX1 and MTX2 (together described as components of the mitochondrial outer membrane sorting assembly machinery (SAM) complex) and DNAJC11, mitochondrial inner membrane protein TMEM11 and with HSPA9. The MICOS and SAM complexes together with DNAJC11 are part of a large protein complex spanning both membranes termed the mitochondrial intermembrane space bridging (MIB) complex. Interacts with DISC1. Interacts with IMMT/MIC60.

The protein localises to the mitochondrion inner membrane. It localises to the mitochondrion. Its function is as follows. Component of the MICOS complex, a large protein complex of the mitochondrial inner membrane that plays crucial roles in the maintenance of crista junctions, inner membrane architecture, and formation of contact sites to the outer membrane. In Rattus norvegicus (Rat), this protein is MICOS complex subunit Mic25 (Chchd6).